The chain runs to 886 residues: Leucine-rich repeat-containing protein sog2 (886 aa).

6 LRR repeats span residues 28 to 49 (NALT…QLER), 53 to 74 (RIAR…ILKF), 76 to 97 (RLRY…LCRL), 99 to 120 (SLEI…FGAL), 122 to 143 (NLKV…IAHM), and 145 to 166 (NLEI…IANN). 4 disordered regions span residues 236-288 (SPGM…THPP), 301-364 (SPRQ…ASPI), 394-431 (PTQL…STRL), and 455-483 (RIFA…TNDS). A compositionally biased stretch (polar residues) spans 243–277 (VTPSPHSHSPAGHQQSTPKSTLSKTNENSEGTLYD). A Phosphoserine modification is found at S301. Polar residues-rich tracts occupy residues 312-347 (SLAT…SSVA), 394-406 (PTQL…TSAI), and 419-431 (SNST…STRL). A Phosphoserine modification is found at S464.

It is found in the cytoplasm. The protein localises to the nucleus. This is Leucine-rich repeat-containing protein sog2 from Schizosaccharomyces pombe (strain 972 / ATCC 24843) (Fission yeast).